The sequence spans 343 residues: MTKTMLRALKGETLPTPPIWLMRQAGRYLPEYRATRAQAGDFLSLCYTPDLAAEVTLQPIRRYGFDAAILFADILLLPQALGADLWFETGEGPRMSTITDMAGVTALKGRDDIHETLAPVYETCRILARELPKETTFIGFAGMPWTVATYMIAGRGSKDQAAAHKLKDTDRPAFEALMDRVTEATIEYLAKQVEAGCEVVKLFDSWAGSLKGQDFEDFAVAPAKRIVSELKARFQGLPVIAFPREAGEGYIGFAEKTGADCVAIDNSVSPEWAAEKVQAGRTCVQGNLDPKYMVTGGEELVQATKRVVEAFRNGPHIFNLGHGITPEADPENVTLLVETIRGK.

Substrate is bound by residues 23–27 (RQAGR), phenylalanine 42, aspartate 73, tyrosine 150, serine 205, and histidine 322.

This sequence belongs to the uroporphyrinogen decarboxylase family. Homodimer.

The protein localises to the cytoplasm. It catalyses the reaction uroporphyrinogen III + 4 H(+) = coproporphyrinogen III + 4 CO2. It participates in porphyrin-containing compound metabolism; protoporphyrin-IX biosynthesis; coproporphyrinogen-III from 5-aminolevulinate: step 4/4. Its activity is regulated as follows. Inhibited by N-ethyl-maleimide and phenylglyoxal. In terms of biological role, catalyzes the decarboxylation of four acetate groups of uroporphyrinogen-III to yield coproporphyrinogen-III. The sequence is that of Uroporphyrinogen decarboxylase (hemE) from Cereibacter sphaeroides (strain ATCC 17023 / DSM 158 / JCM 6121 / CCUG 31486 / LMG 2827 / NBRC 12203 / NCIMB 8253 / ATH 2.4.1.) (Rhodobacter sphaeroides).